Reading from the N-terminus, the 299-residue chain is 4-hydroxy-tetrahydrodipicolinate synthase (299 aa).

Thr-44 is a pyruvate binding site. Tyr-133 serves as the catalytic Proton donor/acceptor. The Schiff-base intermediate with substrate role is filled by Lys-162. Pyruvate is bound at residue Ile-204.

Belongs to the DapA family. As to quaternary structure, homotetramer; dimer of dimers.

The protein resides in the cytoplasm. It catalyses the reaction L-aspartate 4-semialdehyde + pyruvate = (2S,4S)-4-hydroxy-2,3,4,5-tetrahydrodipicolinate + H2O + H(+). The protein operates within amino-acid biosynthesis; L-lysine biosynthesis via DAP pathway; (S)-tetrahydrodipicolinate from L-aspartate: step 3/4. Its function is as follows. Catalyzes the condensation of (S)-aspartate-beta-semialdehyde [(S)-ASA] and pyruvate to 4-hydroxy-tetrahydrodipicolinate (HTPA). This Thermus thermophilus (strain ATCC 27634 / DSM 579 / HB8) protein is 4-hydroxy-tetrahydrodipicolinate synthase.